The primary structure comprises 261 residues: UPF0246 protein Rmet_0978 (261 aa).

Belongs to the UPF0246 family.

The chain is UPF0246 protein Rmet_0978 from Cupriavidus metallidurans (strain ATCC 43123 / DSM 2839 / NBRC 102507 / CH34) (Ralstonia metallidurans).